The following is a 426-amino-acid chain: MLDLKRIRNNSNEIKEALNNRGEKFDVTVIDEVLKLDEERRNILVKVEVLKSKRNKVSSEVPKLKKEGKDVSNIVAEMKNLSEEIKGFDVTLAKIDEKIQYIMLRIPNIPNPQVPDGETDEDNIEIRNWLEPTKFDFEPKAHWDIGTNLNILDFERAGKVTGSRFTFYKGLGARLERAVISYFLDTHTEKHDYTEILPPYMVNRTSMIGTGQLPKFEEDAFKISEDDYFLIPTAEVPVTNLYRDEILKGDELPLKHVAYSACFRSEAGSAGRDTRGLVRQHQFNKVELVKFTKPEQSYEELEKLTNDAETVLKELGIPYRVVRICKGDLGFTAALKYDLEVWMPSYNRYVEISSCSNFEDFQARRANIRYKEDAKAKPQYVHTLNGSGVAIGRTVAAILENYQSEDGSVTIPEVLRPYMGGREVIK.

233–235 (TAE) contributes to the L-serine binding site. An ATP-binding site is contributed by 264–266 (RSE). Residue Glu287 participates in L-serine binding. 351–354 (EISS) serves as a coordination point for ATP. Ser387 contacts L-serine.

The protein belongs to the class-II aminoacyl-tRNA synthetase family. Type-1 seryl-tRNA synthetase subfamily. As to quaternary structure, homodimer. The tRNA molecule binds across the dimer.

The protein resides in the cytoplasm. It carries out the reaction tRNA(Ser) + L-serine + ATP = L-seryl-tRNA(Ser) + AMP + diphosphate + H(+). The catalysed reaction is tRNA(Sec) + L-serine + ATP = L-seryl-tRNA(Sec) + AMP + diphosphate + H(+). It participates in aminoacyl-tRNA biosynthesis; selenocysteinyl-tRNA(Sec) biosynthesis; L-seryl-tRNA(Sec) from L-serine and tRNA(Sec): step 1/1. Its function is as follows. Catalyzes the attachment of serine to tRNA(Ser). Is also able to aminoacylate tRNA(Sec) with serine, to form the misacylated tRNA L-seryl-tRNA(Sec), which will be further converted into selenocysteinyl-tRNA(Sec). This chain is Serine--tRNA ligase, found in Clostridium botulinum (strain Kyoto / Type A2).